The primary structure comprises 306 residues: Olfactory receptor 8G17 (306 aa).

The Extracellular portion of the chain corresponds to 1-28; that stretch reads MEKGNQSTVNKFFLSGLTEQPELQLPLF. The N-linked (GlcNAc...) asparagine glycan is linked to Asn5. The helical transmembrane segment at 29–49 threads the bilayer; sequence LLFLGIYLLTVLGNLGMIILI. Residues 50-56 are Cytoplasmic-facing; the sequence is LLSSYLH. A helical membrane pass occupies residues 57-77; the sequence is TPMYFFLSSLSFIDFCQSTVI. Over 78–97 the chain is Extracellular; sequence TPKMLVKFVREKNEISYPEC. Residues 98–118 traverse the membrane as a helical segment; sequence ITQLCFFVIFAVSESYMLAAM. The Cytoplasmic segment spans residues 119–143; it reads AYDRYVAICSPLLYSSIMSQHKCLS. A helical transmembrane segment spans residues 144 to 164; that stretch reads LVLGVYILGIVCASAHVGCIF. The Extracellular portion of the chain corresponds to 165–196; that stretch reads RIDFCKSDLINHYFCDLISILNLSCSNIFVND. A helical transmembrane segment spans residues 197-217; sequence LVILIFSLINTIFPTLTILSS. Over 218–236 the chain is Cytoplasmic; sequence YAFIIISILRIKSTEGRSK. Residues 237–257 traverse the membrane as a helical segment; sequence AFSTCSSHISAVAIFYISAGF. Residues 258–271 lie on the Extracellular side of the membrane; it reads TYLNPSSSHSMDEG. The chain crosses the membrane as a helical span at residues 272 to 292; sequence KVSSIFYTIIVPMLNPLIYSL. Over 293–306 the chain is Cytoplasmic; sequence RNKDVKIALKKMIE.

The protein belongs to the G-protein coupled receptor 1 family.

Its subcellular location is the cell membrane. In terms of biological role, odorant receptor. This Mus musculus (Mouse) protein is Olfactory receptor 8G17.